The sequence spans 146 residues: uncharacterized protein (146 aa).

Transmembrane regions (helical) follow at residues 1 to 21 (MFAN…AASL), 35 to 55 (AAVY…LFVG), 87 to 107 (GGAG…GVGH), and 111 to 131 (AIAA…GGHL).

Its subcellular location is the cell membrane. This is an uncharacterized protein from Mycobacterium tuberculosis (strain CDC 1551 / Oshkosh).